The primary structure comprises 423 residues: Glutamate-1-semialdehyde 2,1-aminomutase (423 aa).

Lys259 is subject to N6-(pyridoxal phosphate)lysine.

This sequence belongs to the class-III pyridoxal-phosphate-dependent aminotransferase family. HemL subfamily. In terms of assembly, homodimer. Requires pyridoxal 5'-phosphate as cofactor.

It localises to the cytoplasm. The catalysed reaction is (S)-4-amino-5-oxopentanoate = 5-aminolevulinate. It participates in porphyrin-containing compound metabolism; protoporphyrin-IX biosynthesis; 5-aminolevulinate from L-glutamyl-tRNA(Glu): step 2/2. The protein is Glutamate-1-semialdehyde 2,1-aminomutase of Thermosipho melanesiensis (strain DSM 12029 / CIP 104789 / BI429).